The sequence spans 232 residues: Small ribosomal subunit protein uS3 (232 aa).

The KH type-2 domain maps to 39 to 107 (VRQFLTKELA…PAQINIAEVR (69 aa)).

Belongs to the universal ribosomal protein uS3 family. As to quaternary structure, part of the 30S ribosomal subunit. Forms a tight complex with proteins S10 and S14.

Functionally, binds the lower part of the 30S subunit head. Binds mRNA in the 70S ribosome, positioning it for translation. The sequence is that of Small ribosomal subunit protein uS3 from Erwinia tasmaniensis (strain DSM 17950 / CFBP 7177 / CIP 109463 / NCPPB 4357 / Et1/99).